The following is a 1119-amino-acid chain: Period circadian protein homolog 3 (1119 aa).

The segment at 1 to 48 is disordered; sequence MDPCGNPAVPGGDCPQTRGPGLQGSSGQEGPLQGICVDSSHSEHEDRN. A Nuclear export signal 1 motif is present at residues 54 to 63; that stretch reads LIMVVQEMKK. 2 consecutive PAS domains span residues 120 to 187 and 259 to 325; these read LASE…PTQL and YEAP…KVLK. The region spanning 334–377 is the PAC domain; that stretch reads HSPIRFCTQNGDYVILDSSWSSFVNPWSRKVSFIIGRHKVRTSP. Positions 400-409 match the Nuclear export signal 3 motif; that stretch reads LQEQIHRLLL. The span at 419–428 shows a compositional bias: low complexity; it reads GYGSLGSSGS. Disordered regions lie at residues 419 to 449, 483 to 530, 718 to 744, and 878 to 910; these read GYGS…VEEA, VKPV…SSSY, HSRC…SSSS, and LEPT…SRSS. Composition is skewed to polar residues over residues 429-442 and 491-515; these read QEQH…SESS and TEPQ…STDT. The tract at residues 551-750 is CSNK1E binding domain; that stretch reads LKRKCISCTN…SSSSAHLCPH (200 aa). Residues 720–739 carry the Nuclear localization signal motif; that stretch reads RCAGSERRKHKRKKLPTPVD. Basic and acidic residues predominate over residues 885-903; the sequence is HGPRRVEENWETHSEEEHP. Ser-907 carries the phosphoserine modification. A Nuclear export signal 2 motif is present at residues 913–920; the sequence is LQLNLLQE. Residues 947–1011 are disordered; the sequence is GNSGSRSPPC…QDTHRDRAFS (65 aa). A compositionally biased stretch (low complexity) spans 970-988; that stretch reads SPSAAASGSSASSVHGSGS. Residues 989-1001 are compositionally biased toward polar residues; it reads DYTSEVSENGQRS. A CRY binding domain region spans residues 1037 to 1119; it reads ERGRDTVLRE…VQQKTPVEQL (83 aa).

In terms of assembly, homodimer. Component of the circadian core oscillator, which includes the CRY proteins, CLOCK or NPAS2, BMAL1 or BMAL2, CSNK1D and/or CSNK1E, TIMELESS and the PER proteins. Interacts directly with PER1, PER2, CRY1, CRY2, and TIMELESS; interaction with CRY1 and CRY2 is weak and not rhythmic. Interacts with FBXW11 and BTRC. Phosphorylation by CSNK1E is weak and appears to require association with PER1 and translocation to the nucleus. Post-translationally, ubiquitinated.

The protein resides in the cytoplasm. Its subcellular location is the nucleus. Its function is as follows. Originally described as a core component of the circadian clock. The circadian clock, an internal time-keeping system, regulates various physiological processes through the generation of approximately 24 hour circadian rhythms in gene expression, which are translated into rhythms in metabolism and behavior. It is derived from the Latin roots 'circa' (about) and 'diem' (day) and acts as an important regulator of a wide array of physiological functions including metabolism, sleep, body temperature, blood pressure, endocrine, immune, cardiovascular, and renal function. Consists of two major components: the central clock, residing in the suprachiasmatic nucleus (SCN) of the brain, and the peripheral clocks that are present in nearly every tissue and organ system. Both the central and peripheral clocks can be reset by environmental cues, also known as Zeitgebers (German for 'timegivers'). The predominant Zeitgeber for the central clock is light, which is sensed by retina and signals directly to the SCN. The central clock entrains the peripheral clocks through neuronal and hormonal signals, body temperature and feeding-related cues, aligning all clocks with the external light/dark cycle. Circadian rhythms allow an organism to achieve temporal homeostasis with its environment at the molecular level by regulating gene expression to create a peak of protein expression once every 24 hours to control when a particular physiological process is most active with respect to the solar day. Transcription and translation of core clock components (CLOCK, NPAS2, BMAL1, BMAL2, PER1, PER2, PER3, CRY1 and CRY2) plays a critical role in rhythm generation, whereas delays imposed by post-translational modifications (PTMs) are important for determining the period (tau) of the rhythms (tau refers to the period of a rhythm and is the length, in time, of one complete cycle). A diurnal rhythm is synchronized with the day/night cycle, while the ultradian and infradian rhythms have a period shorter and longer than 24 hours, respectively. Disruptions in the circadian rhythms contribute to the pathology of cardiovascular diseases, cancer, metabolic syndromes and aging. A transcription/translation feedback loop (TTFL) forms the core of the molecular circadian clock mechanism. Transcription factors, CLOCK or NPAS2 and BMAL1 or BMAL2, form the positive limb of the feedback loop, act in the form of a heterodimer and activate the transcription of core clock genes and clock-controlled genes (involved in key metabolic processes), harboring E-box elements (5'-CACGTG-3') within their promoters. The core clock genes: PER1/2/3 and CRY1/2 which are transcriptional repressors form the negative limb of the feedback loop and interact with the CLOCK|NPAS2-BMAL1|BMAL2 heterodimer inhibiting its activity and thereby negatively regulating their own expression. This heterodimer also activates nuclear receptors NR1D1, NR1D2, RORA, RORB and RORG, which form a second feedback loop and which activate and repress BMAL1 transcription, respectively. Has a redundant role with the other PER proteins PER1 and PER2 and is not essential for the circadian rhythms maintenance. In contrast, plays an important role in sleep-wake timing and sleep homeostasis probably through the transcriptional regulation of sleep homeostasis-related genes, without influencing circadian parameters. Can bind heme. This chain is Period circadian protein homolog 3 (Per3), found in Rattus norvegicus (Rat).